The sequence spans 439 residues: Ribosomal protein uS12 methylthiotransferase RimO (439 aa).

The region spanning lysine 7–asparagine 119 is the MTTase N-terminal domain. [4Fe-4S] cluster contacts are provided by cysteine 16, cysteine 50, cysteine 82, cysteine 151, cysteine 155, and cysteine 158. Residues threonine 137–lysine 368 enclose the Radical SAM core domain.

This sequence belongs to the methylthiotransferase family. RimO subfamily. [4Fe-4S] cluster is required as a cofactor.

It localises to the cytoplasm. The catalysed reaction is L-aspartate(89)-[ribosomal protein uS12]-hydrogen + (sulfur carrier)-SH + AH2 + 2 S-adenosyl-L-methionine = 3-methylsulfanyl-L-aspartate(89)-[ribosomal protein uS12]-hydrogen + (sulfur carrier)-H + 5'-deoxyadenosine + L-methionine + A + S-adenosyl-L-homocysteine + 2 H(+). Its function is as follows. Catalyzes the methylthiolation of an aspartic acid residue of ribosomal protein uS12. The polypeptide is Ribosomal protein uS12 methylthiotransferase RimO (Helicobacter pylori (strain ATCC 700392 / 26695) (Campylobacter pylori)).